The following is a 330-amino-acid chain: Ribosomal RNA small subunit methyltransferase H (330 aa).

Residues 48–50 (GGH), D67, L101, D115, and Q122 contribute to the S-adenosyl-L-methionine site.

Belongs to the methyltransferase superfamily. RsmH family.

It localises to the cytoplasm. It catalyses the reaction cytidine(1402) in 16S rRNA + S-adenosyl-L-methionine = N(4)-methylcytidine(1402) in 16S rRNA + S-adenosyl-L-homocysteine + H(+). In terms of biological role, specifically methylates the N4 position of cytidine in position 1402 (C1402) of 16S rRNA. The chain is Ribosomal RNA small subunit methyltransferase H from Pseudarthrobacter chlorophenolicus (strain ATCC 700700 / DSM 12829 / CIP 107037 / JCM 12360 / KCTC 9906 / NCIMB 13794 / A6) (Arthrobacter chlorophenolicus).